Here is a 222-residue protein sequence, read N- to C-terminus: Glutathione S-transferase alpha-1 (222 aa).

Met1 is modified (N-acetylmethionine). Positions 3–83 (GKPVLHYFNA…YIATKYDLYG (81 aa)) constitute a GST N-terminal domain. Lys4 carries the N6-succinyllysine modification. Glutathione-binding positions include Tyr9, Lys45, 54–55 (QV), and 67–68 (QT). One can recognise a GST C-terminal domain in the interval 85 to 208 (DMKERALIDM…QPGSQRKLPV (124 aa)).

The protein belongs to the GST superfamily. Alpha family. In terms of assembly, homodimer. Homodimer or heterodimer of GSTA1 and GSTA2.

The protein resides in the cytoplasm. It carries out the reaction RX + glutathione = an S-substituted glutathione + a halide anion + H(+). It catalyses the reaction prostaglandin A2 + glutathione = prostaglandin A2-S-(R)-glutathione. The enzyme catalyses prostaglandin J2 + glutathione = prostaglandin J2-S-(R)-glutathione. The catalysed reaction is (13S)-hydroperoxy-(9Z,11E)-octadecadienoate + 2 glutathione = (13S)-hydroxy-(9Z,11E)-octadecadienoate + glutathione disulfide + H2O. It carries out the reaction androst-5-ene-3,17-dione = androst-4-ene-3,17-dione. Its function is as follows. Glutathione S-transferase that catalyzes the nucleophilic attack of the sulfur atom of glutathione on the electrophilic groups of a wide range of exogenous and endogenous compounds. Involved in the formation of glutathione conjugates of both prostaglandin A2 (PGA2) and prostaglandin J2 (PGJ2). It also catalyzes the isomerization of D5-androstene-3,17-dione (AD) into D4-androstene-3,17-dione and may therefore play an important role in hormone biosynthesis. Through its glutathione-dependent peroxidase activity toward the fatty acid hydroperoxide (13S)-hydroperoxy-(9Z,11E)-octadecadienoate/13-HPODE it is also involved in the metabolism of oxidized linoleic acid. This chain is Glutathione S-transferase alpha-1 (Gsta1), found in Rattus norvegicus (Rat).